The following is an 85-amino-acid chain: Large ribosomal subunit protein bL27 (85 aa).

The tract at residues Met1–Gly22 is disordered.

It belongs to the bacterial ribosomal protein bL27 family.

In Marinomonas sp. (strain MWYL1), this protein is Large ribosomal subunit protein bL27.